We begin with the raw amino-acid sequence, 327 residues long: Poly(ribitol-phosphate) beta-N-acetylglucosaminyltransferase TarP (327 aa).

Residues proline 9, aspartate 41, asparagine 68, arginine 76, and 92 to 94 (DSD) each bind UDP-N-acetyl-alpha-D-glucosamine. Aspartate 94 is a binding site for Mn(2+). Aspartate 181 functions as the Proton acceptor in the catalytic mechanism.

Belongs to the glycosyltransferase 2 family. As to quaternary structure, homotrimer. Mn(2+) is required as a cofactor.

The enzyme catalyses 4-O-[(D-ribitylphospho)(n)-di{(2R)-glycerylphospho}]-N-acetyl-beta-D-mannosaminyl-(1-&gt;4)-N-acetyl-alpha-D-glucosaminyl di-trans,octa-cis-undecaprenyl diphosphate + n UDP-N-acetyl-alpha-D-glucosamine = 4-O-([3-N-acetyl-beta-D-glucosaminyl-1-D-ribitylphospho](n)-di{[2R]-1-glycerylphospho})-N-acetyl-beta-D-mannosaminyl-(1-&gt;4)-N-acetyl-alpha-D-glucosaminyl di-trans,octa-cis-undecaprenyl diphosphate + n UDP + n H(+). Its pathway is cell wall biogenesis; poly(ribitol phosphate) teichoic acid biosynthesis. Its function is as follows. Attaches beta-O-GlcNAc (beta-O-N-acetyl-D-glucosamine) residues to the C3 position of poly(RboP)-wall teichoic acids (WTAs). Attenuates immunogenicity of WTA and protects S.aureus against adaptative host defenses by allowing bacteria to evade recognition by preexisting anti-S.aureus antibodies. Also protects the cell from podophage infection. This chain is Poly(ribitol-phosphate) beta-N-acetylglucosaminyltransferase TarP, found in Staphylococcus aureus (strain N315).